The chain runs to 277 residues: Diaminopimelate epimerase (277 aa).

Substrate is bound by residues N15, Q48, and N66. The active-site Proton donor is C75. Substrate is bound by residues 76–77, N156, N189, and 207–208; these read GN and ER. The active-site Proton acceptor is the C216. Residue 217–218 coordinates substrate; that stretch reads GS.

Belongs to the diaminopimelate epimerase family. Homodimer.

The protein resides in the cytoplasm. The enzyme catalyses (2S,6S)-2,6-diaminopimelate = meso-2,6-diaminopimelate. The protein operates within amino-acid biosynthesis; L-lysine biosynthesis via DAP pathway; DL-2,6-diaminopimelate from LL-2,6-diaminopimelate: step 1/1. Its function is as follows. Catalyzes the stereoinversion of LL-2,6-diaminopimelate (L,L-DAP) to meso-diaminopimelate (meso-DAP), a precursor of L-lysine and an essential component of the bacterial peptidoglycan. This is Diaminopimelate epimerase from Acidiphilium cryptum (strain JF-5).